A 321-amino-acid polypeptide reads, in one-letter code: Reticulon-2 (321 aa).

Disordered stretches follow at residues 1–36 (MGHV…SPVT) and 65–85 (PPVR…PREE). The Reticulon domain occupies 134–321 (VKDLLYWRDI…TVKKPPAKQK (188 aa)). The next 2 helical transmembrane spans lie at 163–183 (FSVI…TLTL) and 250–270 (FLVI…ITVL).

It localises to the endoplasmic reticulum membrane. Its subcellular location is the sarcoplasmic reticulum membrane. It is found in the cell membrane. The protein resides in the sarcolemma. The protein localises to the T-tubule. It localises to the cytoplasm. Its subcellular location is the myofibril. It is found in the sarcomere. The protein resides in the z line. The protein localises to the cytoskeleton. Functionally, inhibits amyloid precursor protein processing, probably by blocking BACE1 activity. Enhances trafficking of the glutamate transporter SLC1A1/EAAC1 from the endoplasmic reticulum to the cell surface. Plays a role in the translocation of SLC2A4/GLUT4 from intracellular membranes to the cell membrane which facilitates the uptake of glucose into the cell. This chain is Reticulon-2, found in Xenopus tropicalis (Western clawed frog).